The chain runs to 240 residues: Methylthioribulose-1-phosphate dehydratase (240 aa).

Cys-99 contacts substrate. The Zn(2+) site is built by His-116 and His-118. Catalysis depends on Glu-145, which acts as the Proton donor/acceptor. Residue His-201 participates in Zn(2+) binding.

This sequence belongs to the aldolase class II family. MtnB subfamily. The cofactor is Zn(2+).

The protein localises to the cytoplasm. It carries out the reaction 5-(methylsulfanyl)-D-ribulose 1-phosphate = 5-methylsulfanyl-2,3-dioxopentyl phosphate + H2O. Its pathway is amino-acid biosynthesis; L-methionine biosynthesis via salvage pathway; L-methionine from S-methyl-5-thio-alpha-D-ribose 1-phosphate: step 2/6. Its function is as follows. Catalyzes the dehydration of methylthioribulose-1-phosphate (MTRu-1-P) into 2,3-diketo-5-methylthiopentyl-1-phosphate (DK-MTP-1-P). This is Methylthioribulose-1-phosphate dehydratase from Ajellomyces capsulatus (strain G186AR / H82 / ATCC MYA-2454 / RMSCC 2432) (Darling's disease fungus).